Here is a 462-residue protein sequence, read N- to C-terminus: S-alkyl-thiohydroximate lyase SUR1 (462 aa).

The protein belongs to the class-I pyridoxal-phosphate-dependent aminotransferase family. Pyridoxal 5'-phosphate is required as a cofactor.

In terms of biological role, C-S lyase involved in glucosinolate biosynthesis. Converts S-(alkylacetohydroximoyl)-L-cysteine to thiohydroximate. Functions in auxin homeostasis. Probably required for glucosinolate activation in response to pathogens. This chain is S-alkyl-thiohydroximate lyase SUR1 (SUR1), found in Arabidopsis thaliana (Mouse-ear cress).